The sequence spans 445 residues: Cytochrome P450 monooxygenase penB (445 aa).

C381 lines the heme pocket.

The protein belongs to the cytochrome P450 family. It depends on heme as a cofactor.

The protein operates within secondary metabolite biosynthesis. It participates in alkaloid biosynthesis. It functions in the pathway mycotoxin biosynthesis. In terms of biological role, cytochrome P450 monooxygenase; part of the gene cluster that mediates the biosynthesis of penigequinolones, potent insecticidal alkaloids that contain a highly modified 10-carbon prenyl group. The first stage is catalyzed by the nonribosomal peptide synthetase penN that condenses anthranilic acid and O-methyl-L-tyrosine to produce 4'-methoxycyclopeptin. 4'-methoxycyclopeptin is then converted to 4'-methoxydehydrocyclopeptin by the ketoglutarate-dependent dioxygenase penM through dehydrogenation to form a double bond between C-alpha and C-beta of the O-methyltyrosine side chain. PenM also converts its first product methoxydehydrocyclopeptin to 4'-methoxycyclopenin. The following conversion of 4'methoxycyclopenin into 4'-methoxyviridicatin is catalyzed by the cyclopenase penL. 4'-methoxyviridicatin is the precursor of quinolone natural products, and is further converted to quinolinone B. The prenyltransferase penI then catalyzes the canonical Friedel-Crafts alkylation of quinolinone B with dimethylallyl cation to yield dimethylallyl quinolone, which is subjected to FAD-dependent dehydrogenation by the FAD-linked oxidoreductase penH to yield conjugated aryl diene. The delta(3') double bond then serves as the site of the second alkylation with DMAPP catalyzed by the prenyltransferase penG to yield a carbenium ion intermediate, which can be attacked by H(2)O to yield a styrenyl quinolone containing a C3'-hydroxyprenyl chain, or undergo cyclization to yield yaequinolones J1 and J2. The conversion of the styrenyl quinolone into the tetrahydrofuran-containing yaequinolone C is performed by the FAD-dependent monooxygenase penE and involves epoxidation of the terminal C7'-C8' olefin, followed by epoxide ring opening initiated by the C3' hydroxyl group. The predicted cysteine hydrolase penJ acts as an epoxide hydrolase that enhances the rate of the 5-exo-tet cyclization step, increasing the yield of yaequinolone C. PenF catalyzes the cationic rearrangement of the epoxide formed by penE (before ring opening to produce yaequinolone C) into yaequinolone D. Finally, the short-chain dehydrogenase/reductase (SDR)-like reductase penD, catalyzes both the dehydration of yaequinolone D and the reduction of the resulting oxonium to yield penigequinolone. In Penicillium thymicola, this protein is Cytochrome P450 monooxygenase penB.